Consider the following 168-residue polypeptide: Probable chemoreceptor glutamine deamidase CheD 2 (168 aa).

This sequence belongs to the CheD family.

The enzyme catalyses L-glutaminyl-[protein] + H2O = L-glutamyl-[protein] + NH4(+). Probably deamidates glutamine residues to glutamate on methyl-accepting chemotaxis receptors (MCPs), playing an important role in chemotaxis. In Leptospira interrogans serogroup Icterohaemorrhagiae serovar copenhageni (strain Fiocruz L1-130), this protein is Probable chemoreceptor glutamine deamidase CheD 2.